We begin with the raw amino-acid sequence, 197 residues long: Phosphoheptose isomerase (197 aa).

The SIS domain maps to 34–192 (MVNALINGNK…CEGVDDCLFP (159 aa)). Substrate contacts are provided by residues 49 to 51 (NGG), Gln62, 91 to 92 (ND), Ser122, and His172. Gln62 provides a ligand contact to Zn(2+). Positions 172 and 180 each coordinate Zn(2+).

Belongs to the SIS family. GmhA subfamily. Homotetramer. Zn(2+) serves as cofactor.

The protein resides in the cytoplasm. The catalysed reaction is 2 D-sedoheptulose 7-phosphate = D-glycero-alpha-D-manno-heptose 7-phosphate + D-glycero-beta-D-manno-heptose 7-phosphate. It functions in the pathway carbohydrate biosynthesis; D-glycero-D-manno-heptose 7-phosphate biosynthesis; D-glycero-alpha-D-manno-heptose 7-phosphate and D-glycero-beta-D-manno-heptose 7-phosphate from sedoheptulose 7-phosphate: step 1/1. Its function is as follows. Catalyzes the isomerization of sedoheptulose 7-phosphate in D-glycero-D-manno-heptose 7-phosphate. The polypeptide is Phosphoheptose isomerase (Pseudoalteromonas atlantica (strain T6c / ATCC BAA-1087)).